We begin with the raw amino-acid sequence, 106 residues long: MNNERLMLKGIFLGAAAGAALSLLHKPTRQACGMRWLTCKHKLSLYKSNPELLKNTVITKVDEAKKLARTLSKEVDFVNQQVKELKKTTPQVMELVQETKEHFSKK.

A signal peptide spans 1–31 (MNNERLMLKGIFLGAAAGAALSLLHKPTRQA). A coiled-coil region spans residues 57 to 89 (VITKVDEAKKLARTLSKEVDFVNQQVKELKKTT).

This is an uncharacterized protein from Bacillus subtilis (strain 168).